A 299-amino-acid polypeptide reads, in one-letter code: 4-hydroxybenzoate octaprenyltransferase (299 aa).

The next 8 helical transmembrane spans lie at 33 to 53 (VGFL…AGGV), 56 to 76 (WWTL…GCVI), 107 to 127 (LLMF…MNQL), 151 to 171 (LPQV…FAAI), 180 to 200 (WLLY…CAMV), 214 to 234 (AILF…LMLF), 247 to 267 (HTYW…FIIA), and 278 to 298 (AFMH…LATT).

This sequence belongs to the UbiA prenyltransferase family. The cofactor is Mg(2+).

It localises to the cell inner membrane. The enzyme catalyses all-trans-octaprenyl diphosphate + 4-hydroxybenzoate = 4-hydroxy-3-(all-trans-octaprenyl)benzoate + diphosphate. It participates in cofactor biosynthesis; ubiquinone biosynthesis. In terms of biological role, catalyzes the prenylation of para-hydroxybenzoate (PHB) with an all-trans polyprenyl group. Mediates the second step in the final reaction sequence of ubiquinone-8 (UQ-8) biosynthesis, which is the condensation of the polyisoprenoid side chain with PHB, generating the first membrane-bound Q intermediate 3-octaprenyl-4-hydroxybenzoate. The sequence is that of 4-hydroxybenzoate octaprenyltransferase from Xylella fastidiosa (strain 9a5c).